The primary structure comprises 79 residues: Small ribosomal subunit protein bS18 (79 aa).

It belongs to the bacterial ribosomal protein bS18 family. As to quaternary structure, part of the 30S ribosomal subunit. Forms a tight heterodimer with protein bS6.

Its function is as follows. Binds as a heterodimer with protein bS6 to the central domain of the 16S rRNA, where it helps stabilize the platform of the 30S subunit. The sequence is that of Small ribosomal subunit protein bS18 from Micrococcus luteus (strain ATCC 4698 / DSM 20030 / JCM 1464 / CCM 169 / CCUG 5858 / IAM 1056 / NBRC 3333 / NCIMB 9278 / NCTC 2665 / VKM Ac-2230) (Micrococcus lysodeikticus).